Consider the following 288-residue polypeptide: Inositol monophosphatase 2 (288 aa).

Residues glutamate 81, aspartate 101, isoleucine 103, and aspartate 104 each coordinate Mg(2+). Glutamate 81 is a binding site for substrate. Substrate-binding positions include 103-106, 205-207, glutamine 224, and aspartate 231; these read IDGT and GSS. Residue aspartate 231 participates in Mg(2+) binding.

Belongs to the inositol monophosphatase superfamily. As to quaternary structure, homodimer. It depends on Mg(2+) as a cofactor.

It localises to the cytoplasm. It catalyses the reaction a myo-inositol phosphate + H2O = myo-inositol + phosphate. The catalysed reaction is 1D-myo-inositol 1-phosphate + H2O = myo-inositol + phosphate. It carries out the reaction 1D-myo-inositol 2-phosphate + H2O = myo-inositol + phosphate. The enzyme catalyses 1D-myo-inositol 3-phosphate + H2O = myo-inositol + phosphate. It catalyses the reaction 1D-myo-inositol 4-phosphate + H2O = myo-inositol + phosphate. The catalysed reaction is 1D-myo-inositol 5-phosphate + H2O = myo-inositol + phosphate. It carries out the reaction 1D-myo-inositol 6-phosphate + H2O = myo-inositol + phosphate. The enzyme catalyses alpha-D-glucose 1-phosphate + H2O = D-glucose + phosphate. It catalyses the reaction glycerol 2-phosphate + H2O = glycerol + phosphate. The catalysed reaction is adenosine 2'-phosphate + H2O = adenosine + phosphate. Its pathway is polyol metabolism; myo-inositol biosynthesis; myo-inositol from D-glucose 6-phosphate: step 2/2. With respect to regulation, inhibited by high Li(+) and restricted Mg(2+) concentrations. In terms of biological role, phosphatase that can use myo-inositol monophosphates, myo-inositol 1,4-diphosphate, scyllo-inositol-1,4-diphosphate, glucose-1-phosphate, beta-glycerophosphate and 2'-AMP as substrates in vitro. It is likely that IMPA2 has an as yet unidentified in vivo substrate(s). Has been implicated as the pharmacological target for lithium (Li(+)) action in brain. In Homo sapiens (Human), this protein is Inositol monophosphatase 2.